The primary structure comprises 227 residues: Phosphoribosylformylglycinamidine synthase subunit PurQ (227 aa).

Positions 2 to 227 (RWAIVRFPGA…FLGLVREVAR (226 aa)) constitute a Glutamine amidotransferase type-1 domain. The active-site Nucleophile is the C85. Residues H200 and E202 contribute to the active site.

In terms of assembly, part of the FGAM synthase complex composed of 1 PurL, 1 PurQ and 2 PurS subunits.

Its subcellular location is the cytoplasm. It catalyses the reaction N(2)-formyl-N(1)-(5-phospho-beta-D-ribosyl)glycinamide + L-glutamine + ATP + H2O = 2-formamido-N(1)-(5-O-phospho-beta-D-ribosyl)acetamidine + L-glutamate + ADP + phosphate + H(+). It carries out the reaction L-glutamine + H2O = L-glutamate + NH4(+). Its pathway is purine metabolism; IMP biosynthesis via de novo pathway; 5-amino-1-(5-phospho-D-ribosyl)imidazole from N(2)-formyl-N(1)-(5-phospho-D-ribosyl)glycinamide: step 1/2. Part of the phosphoribosylformylglycinamidine synthase complex involved in the purines biosynthetic pathway. Catalyzes the ATP-dependent conversion of formylglycinamide ribonucleotide (FGAR) and glutamine to yield formylglycinamidine ribonucleotide (FGAM) and glutamate. The FGAM synthase complex is composed of three subunits. PurQ produces an ammonia molecule by converting glutamine to glutamate. PurL transfers the ammonia molecule to FGAR to form FGAM in an ATP-dependent manner. PurS interacts with PurQ and PurL and is thought to assist in the transfer of the ammonia molecule from PurQ to PurL. This chain is Phosphoribosylformylglycinamidine synthase subunit PurQ, found in Thermus thermophilus (strain ATCC BAA-163 / DSM 7039 / HB27).